The sequence spans 338 residues: D-erythrose-4-phosphate dehydrogenase (338 aa).

12–13 (RI) contacts NAD(+). Residues 154–156 (SCT), Arg200, 213–214 (TK), and Arg236 each bind substrate. The active-site Nucleophile is Cys155. Asn318 provides a ligand contact to NAD(+).

The protein belongs to the glyceraldehyde-3-phosphate dehydrogenase family. Epd subfamily. Homotetramer.

It localises to the cytoplasm. It catalyses the reaction D-erythrose 4-phosphate + NAD(+) + H2O = 4-phospho-D-erythronate + NADH + 2 H(+). Its pathway is cofactor biosynthesis; pyridoxine 5'-phosphate biosynthesis; pyridoxine 5'-phosphate from D-erythrose 4-phosphate: step 1/5. Its function is as follows. Catalyzes the NAD-dependent conversion of D-erythrose 4-phosphate to 4-phosphoerythronate. This chain is D-erythrose-4-phosphate dehydrogenase, found in Yersinia pestis bv. Antiqua (strain Antiqua).